The primary structure comprises 2049 residues: Nonribosomal peptide synthetase tcpP (2049 aa).

An adenylation 1 region spans residues 13-395 (RHHAEAHPEA…LGRKDQLIKN (383 aa)). The Carrier 1 domain occupies 497–573 (ATADTKLSAL…EISNHIIEFD (77 aa)). Position 534 is an O-(pantetheine 4'-phosphoryl)serine (Ser534). The segment at 605-913 (REITMTDVQR…ALGSKMDLLS (309 aa)) is condensation 1. The segment at 1071–1452 (VAAWPMSVAL…GRADHQVKVR (382 aa)) is adenylation 2. The Carrier 2 domain occupies 1550-1625 (DHTELVVSQV…SLAASVKKHL (76 aa)). At Ser1585 the chain carries O-(pantetheine 4'-phosphoryl)serine. A condensation 2 region spans residues 1662–2044 (MHKQASNPSS…FEQEICNLLD (383 aa)).

It belongs to the NRP synthetase family.

The protein operates within secondary metabolite biosynthesis. Its function is as follows. Nonribosomal peptide synthetase; part of the gene cluster that mediates the biosynthesis of an unusual class of epipolythiodioxopiperazines (ETPs) lacking the reactive thiol group important for toxicity. Firstly, L-tyrosine is prenylated by tcpD, before undergoing condensation with L-glycine in a reaction catalyzed by the NRPS tcpP leading to the diketopiperazine (DKP) backbone. Afterwards the alpha-carbon of tyrosine is oxidized by the cytochrome P450 tcpC to form a hydroxyl group. However, in contrast other ETP biosynthesis pathways studied so far, tcpC is not able to bishydroxylate the DKP at both alpha-carbon positions, but hydroxylates the alpha-carbon of the tyrosine part and the nitrogen of the glycine part. The next steps involve an alpha,beta-elimination reaction catalyzed by tcpI, a methylation by the methyltransferase tcpN the action of the four enzyme cascade tcpG/K/J/I. Due to a dysfunctional cytochrome P450 monooxygenase tcpC, the pathway leads to the biosynthesis of probable non-toxic metabolites lacking the reactive thiol group. The chain is Nonribosomal peptide synthetase tcpP from Claviceps purpurea (strain 20.1) (Ergot fungus).